The sequence spans 129 residues: Follitropin subunit beta (129 aa).

A signal peptide spans 1-18; it reads MKSVQFCFLFCCWRVICC. Cystine bridges form between Cys-21/Cys-69, Cys-35/Cys-84, Cys-38/Cys-122, Cys-46/Cys-100, Cys-50/Cys-102, and Cys-105/Cys-112. 2 N-linked (GlcNAc...) asparagine glycosylation sites follow: Asn-25 and Asn-42.

This sequence belongs to the glycoprotein hormones subunit beta family. As to quaternary structure, heterodimer. The active follitropin is a heterodimer composed of an alpha chain/CGA shared with other hormones and a unique beta chain/FSHB shown here.

The protein localises to the secreted. Functionally, together with the alpha chain CGA constitutes follitropin, the follicle-stimulating hormone, and provides its biological specificity to the hormone heterodimer. Binds FSHR, a G protein-coupled receptor, on target cells to activate downstream signaling pathways. Follitropin is involved in follicle development and spermatogenesis in reproductive organs. This chain is Follitropin subunit beta (FSHB), found in Panthera tigris altaica (Siberian tiger).